Reading from the N-terminus, the 438-residue chain is Enolase (438 aa).

Residue Gln174 participates in (2R)-2-phosphoglycerate binding. Glu216 acts as the Proton donor in catalysis. Mg(2+) is bound by residues Asp253, Glu297, and Asp324. Lys349, Arg378, Ser379, and Lys400 together coordinate (2R)-2-phosphoglycerate. Lys349 serves as the catalytic Proton acceptor.

Belongs to the enolase family. In terms of assembly, component of the RNA degradosome, a multiprotein complex involved in RNA processing and mRNA degradation. Mg(2+) is required as a cofactor.

The protein localises to the cytoplasm. The protein resides in the secreted. It localises to the cell surface. The catalysed reaction is (2R)-2-phosphoglycerate = phosphoenolpyruvate + H2O. The protein operates within carbohydrate degradation; glycolysis; pyruvate from D-glyceraldehyde 3-phosphate: step 4/5. Functionally, catalyzes the reversible conversion of 2-phosphoglycerate (2-PG) into phosphoenolpyruvate (PEP). It is essential for the degradation of carbohydrates via glycolysis. The sequence is that of Enolase from Psychrobacter cryohalolentis (strain ATCC BAA-1226 / DSM 17306 / VKM B-2378 / K5).